Consider the following 411-residue polypeptide: UDP-N-acetylmuramoylalanine--D-glutamate ligase (411 aa).

92-98 (GTDGKST) contributes to the ATP binding site.

It belongs to the MurCDEF family.

Its subcellular location is the cytoplasm. It carries out the reaction UDP-N-acetyl-alpha-D-muramoyl-L-alanine + D-glutamate + ATP = UDP-N-acetyl-alpha-D-muramoyl-L-alanyl-D-glutamate + ADP + phosphate + H(+). It participates in cell wall biogenesis; peptidoglycan biosynthesis. Cell wall formation. Catalyzes the addition of glutamate to the nucleotide precursor UDP-N-acetylmuramoyl-L-alanine (UMA). In Hydrogenobaculum sp. (strain Y04AAS1), this protein is UDP-N-acetylmuramoylalanine--D-glutamate ligase.